The sequence spans 336 residues: Cytoskeleton protein RodZ (336 aa).

Over 1–111 (MNTEATHDQN…LGKRRKKRDG (111 aa)) the chain is Cytoplasmic. In terms of domain architecture, HTH cro/C1-type spans 19 to 71 (LRNAREQLGLSQQAVAERLCLKVSTVRDIEEDKAPSDLASTFLRGYIRSYARL). The segment at residues 30–49 (QQAVAERLCLKVSTVRDIEE) is a DNA-binding region (H-T-H motif). A helical; Signal-anchor for type II membrane protein transmembrane segment spans residues 112-132 (WLMSFTWLVLFVVVGLTGAWW). Over 133-336 (WQNHKAQQEE…TLNAEPTPAQ (204 aa)) the chain is Periplasmic. Positions 155–243 (NADKDSGQSV…PSALPTSQAG (89 aa)) are disordered. The segment covering 161–175 (GQSVPLDTGAVTSQD) has biased composition (polar residues). Low complexity-rich tracts occupy residues 176–214 (TTPA…VVAP) and 221–243 (TAAT…SQAG).

It belongs to the RodZ family.

It is found in the cell inner membrane. Cytoskeletal protein that is involved in cell-shape control through regulation of the length of the long axis. The chain is Cytoskeleton protein RodZ from Salmonella newport (strain SL254).